The primary structure comprises 683 residues: uncharacterized protein (683 aa).

Polar residues-rich tracts occupy residues 407–420 (FETS…TYTP) and 512–529 (EGSS…SSEA). 3 disordered regions span residues 407 to 427 (FETS…KLST), 509 to 556 (FSRE…SSTV), and 621 to 648 (HNTS…DHPD). A compositionally biased stretch (low complexity) spans 531–542 (LPPLLTTTPTPT). Composition is skewed to polar residues over residues 543–556 (NTEK…SSTV) and 621–630 (HNTSMPNPHH). The span at 633 to 648 (VKPEDHPHHPEGDHPD) shows a compositional bias: basic and acidic residues. A helical transmembrane segment spans residues 657 to 677 (IWLLPIAGTIFALVALVIVNI).

It localises to the host membrane. This is an uncharacterized protein from Alcelaphine herpesvirus 1 (strain C500) (AlHV-1).